The following is a 207-amino-acid chain: Large ribosomal subunit protein bL20 (207 aa).

Residues 117 to 161 (QETQPQPEEKTSLQPEKVLSTELSEEKSDDTLETKPQTTQVKAKK) form a disordered region. Residues 140–149 (SEEKSDDTLE) are compositionally biased toward basic and acidic residues.

This sequence belongs to the bacterial ribosomal protein bL20 family.

Functionally, binds directly to 23S ribosomal RNA and is necessary for the in vitro assembly process of the 50S ribosomal subunit. It is not involved in the protein synthesizing functions of that subunit. This Onion yellows phytoplasma (strain OY-M) protein is Large ribosomal subunit protein bL20.